The primary structure comprises 399 residues: Elongation factor Tu 1 (399 aa).

The 192-residue stretch at 17–208 (KPHVNVGTIG…LDDYVEVPPR (192 aa)) folds into the tr-type G domain. Positions 26–33 (GHVDHGKT) are G1. A GTP-binding site is contributed by 26 to 33 (GHVDHGKT). Thr-33 contacts Mg(2+). The segment at 62–66 (GITIA) is G2. Residues 83–86 (DCPG) form a G3 region. GTP contacts are provided by residues 83–87 (DCPGH) and 138–141 (NKAD). A G4 region spans residues 138-141 (NKAD). Residues 175–177 (SAL) are G5.

The protein belongs to the TRAFAC class translation factor GTPase superfamily. Classic translation factor GTPase family. EF-Tu/EF-1A subfamily. Monomer.

It is found in the cytoplasm. The enzyme catalyses GTP + H2O = GDP + phosphate + H(+). GTP hydrolase that promotes the GTP-dependent binding of aminoacyl-tRNA to the A-site of ribosomes during protein biosynthesis. The polypeptide is Elongation factor Tu 1 (Wolbachia sp. subsp. Brugia malayi (strain TRS)).